Here is a 485-residue protein sequence, read N- to C-terminus: Glutamyl-tRNA(Gln) amidotransferase subunit A (485 aa).

Catalysis depends on charge relay system residues lysine 80 and serine 155. Serine 179 acts as the Acyl-ester intermediate in catalysis.

The protein belongs to the amidase family. GatA subfamily. Heterotrimer of A, B and C subunits.

It carries out the reaction L-glutamyl-tRNA(Gln) + L-glutamine + ATP + H2O = L-glutaminyl-tRNA(Gln) + L-glutamate + ADP + phosphate + H(+). Functionally, allows the formation of correctly charged Gln-tRNA(Gln) through the transamidation of misacylated Glu-tRNA(Gln) in organisms which lack glutaminyl-tRNA synthetase. The reaction takes place in the presence of glutamine and ATP through an activated gamma-phospho-Glu-tRNA(Gln). The polypeptide is Glutamyl-tRNA(Gln) amidotransferase subunit A (Leptospira borgpetersenii serovar Hardjo-bovis (strain L550)).